The primary structure comprises 322 residues: Cytochrome c biogenesis protein CcsA (322 aa).

A run of 8 helical transmembrane segments spans residues 19–39 (NAIF…LIIV), 43–63 (LICN…FFYL), 72–92 (FFPL…LLFI), 104–124 (VIGA…SLSL), 150–170 (MMLS…YLVL), 230–250 (TIGI…VWAN), 264–281 (TWAL…HARL), and 291–311 (AFLG…VNFL).

It belongs to the CcmF/CycK/Ccl1/NrfE/CcsA family. In terms of assembly, may interact with Ccs1.

It localises to the plastid. It is found in the chloroplast thylakoid membrane. Its function is as follows. Required during biogenesis of c-type cytochromes (cytochrome c6 and cytochrome f) at the step of heme attachment. The chain is Cytochrome c biogenesis protein CcsA from Heterosigma akashiwo (strain NIES-293 / 8280G21-1).